The following is a 359-amino-acid chain: Peptide chain release factor 1 (359 aa).

N5-methylglutamine is present on Q236.

It belongs to the prokaryotic/mitochondrial release factor family. Methylated by PrmC. Methylation increases the termination efficiency of RF1.

Its subcellular location is the cytoplasm. Peptide chain release factor 1 directs the termination of translation in response to the peptide chain termination codons UAG and UAA. This Streptococcus thermophilus (strain ATCC BAA-250 / LMG 18311) protein is Peptide chain release factor 1.